Reading from the N-terminus, the 248-residue chain is Phosphatidylglycerol--prolipoprotein diacylglyceryl transferase (248 aa).

The next 3 helical transmembrane spans lie at 6–26 (FTLF…GMIL), 47–67 (NIAI…YVVF), and 84–104 (GGGL…YIYT). Arg130 serves as a coordination point for a 1,2-diacyl-sn-glycero-3-phospho-(1'-sn-glycerol). Transmembrane regions (helical) follow at residues 186–206 (GQVI…IEGL) and 218–238 (MAQV…VYLS).

This sequence belongs to the Lgt family.

Its subcellular location is the cell membrane. The catalysed reaction is L-cysteinyl-[prolipoprotein] + a 1,2-diacyl-sn-glycero-3-phospho-(1'-sn-glycerol) = an S-1,2-diacyl-sn-glyceryl-L-cysteinyl-[prolipoprotein] + sn-glycerol 1-phosphate + H(+). It functions in the pathway protein modification; lipoprotein biosynthesis (diacylglyceryl transfer). Its function is as follows. Catalyzes the transfer of the diacylglyceryl group from phosphatidylglycerol to the sulfhydryl group of the N-terminal cysteine of a prolipoprotein, the first step in the formation of mature lipoproteins. The polypeptide is Phosphatidylglycerol--prolipoprotein diacylglyceryl transferase (Clostridioides difficile (strain 630) (Peptoclostridium difficile)).